The chain runs to 449 residues: Probable phosphoglucosamine mutase (449 aa).

The Phosphoserine intermediate role is filled by S101. Residues S101, D239, D241, and D243 each coordinate Mg(2+). S101 carries the post-translational modification Phosphoserine.

This sequence belongs to the phosphohexose mutase family. Mg(2+) serves as cofactor. In terms of processing, activated by phosphorylation.

It carries out the reaction alpha-D-glucosamine 1-phosphate = D-glucosamine 6-phosphate. Catalyzes the conversion of glucosamine-6-phosphate to glucosamine-1-phosphate. This chain is Probable phosphoglucosamine mutase, found in Methanothermobacter thermautotrophicus (strain ATCC 29096 / DSM 1053 / JCM 10044 / NBRC 100330 / Delta H) (Methanobacterium thermoautotrophicum).